We begin with the raw amino-acid sequence, 266 residues long: METTVSAKNSLENENFLKEKSETVFLDEAAITKPPASKKKRKNRKKKKNNGPSEQFVGNNDLEEQRSGSIDSKDKEKPLDEKVKELENANKTLSDLVRRIQIQRDEAEQKAEIYNRDALNTKQEHLDIKKRLEKSDETVCKLKEENENLQDMLRNVGNELVESRDEIKELIEKQKVQKESVKSHESELSSVMSSEILPKASSDSAGSFEPPVISNISKELINKEYARNVLLQFLENHEHRDKILPILSTALDLEEVHQHLILKNLN.

A compositionally biased stretch (polar residues) spans 1-13 (METTVSAKNSLEN). Positions 1–88 (METTVSAKNS…LDEKVKELEN (88 aa)) are disordered. Serine 10 carries the phosphoserine modification. A compositionally biased stretch (basic residues) spans 36-49 (ASKKKRKNRKKKKN). Over residues 63–88 (EEQRSGSIDSKDKEKPLDEKVKELEN) the composition is skewed to basic and acidic residues. A coiled-coil region spans residues 73–188 (KDKEKPLDEK…ESVKSHESEL (116 aa)). 2 positions are modified to phosphoserine: serine 202 and serine 204. In terms of domain architecture, GRIP spans 216–264 (ISKELINKEYARNVLLQFLENHEHRDKILPILSTALDLEEVHQHLILKN).

It localises to the cytoplasm. The polypeptide is GRIP and coiled-coil domain-containing protein C365.11 (Schizosaccharomyces pombe (strain 972 / ATCC 24843) (Fission yeast)).